The following is a 202-amino-acid chain: MSRYRGPRLRVVRRLGELPGLSRKTPRRAYPPGQHGQARKKRSEYAAQLEEKQKLRFNYGLSERQLLRYVRKARRAGGSTGQTLLQLLEMRLDNTIFRLGMAPTIPAARQLVNHGHVLVNGRVVSIASYQCRPGDVIQSRDRDASRKLIETHMQFPGLANIPTHLDFDKNTLTGKVNGVIEREWIALEINELLVVEYYSRKG.

Positions Glu17–Arg42 are disordered. The 63-residue stretch at Met90–His152 folds into the S4 RNA-binding domain.

This sequence belongs to the universal ribosomal protein uS4 family. As to quaternary structure, part of the 30S ribosomal subunit. Contacts protein S5. The interaction surface between S4 and S5 is involved in control of translational fidelity.

In terms of biological role, one of the primary rRNA binding proteins, it binds directly to 16S rRNA where it nucleates assembly of the body of the 30S subunit. With S5 and S12 plays an important role in translational accuracy. This is Small ribosomal subunit protein uS4 from Acaryochloris marina (strain MBIC 11017).